The following is a 448-amino-acid chain: Phosphoglucosamine mutase (448 aa).

Serine 99 (phosphoserine intermediate) is an active-site residue. Residues serine 99, aspartate 239, aspartate 241, and aspartate 243 each coordinate Mg(2+). At serine 99 the chain carries Phosphoserine.

The protein belongs to the phosphohexose mutase family. Mg(2+) serves as cofactor. Post-translationally, activated by phosphorylation.

It carries out the reaction alpha-D-glucosamine 1-phosphate = D-glucosamine 6-phosphate. Functionally, catalyzes the conversion of glucosamine-6-phosphate to glucosamine-1-phosphate. In Lachnoclostridium phytofermentans (strain ATCC 700394 / DSM 18823 / ISDg) (Clostridium phytofermentans), this protein is Phosphoglucosamine mutase.